A 311-amino-acid polypeptide reads, in one-letter code: Cytosolic Fe-S cluster assembly factor Nubp1 homolog (311 aa).

Residues 1–21 (MQAPPPEHCPGVESEDAGKGS) are disordered. Positions 9, 23, 26, and 32 each coordinate [4Fe-4S] cluster. ATP is bound at residue 63–70 (GKGGVGKS). 2 residues coordinate [4Fe-4S] cluster: Cys240 and Cys243.

It belongs to the Mrp/NBP35 ATP-binding proteins family. NUBP1/NBP35 subfamily. Heterotetramer of 2 Nubp1 and 2 Nubp2 chains. The cofactor is [4Fe-4S] cluster.

It localises to the cytoplasm. Functionally, component of the cytosolic iron-sulfur (Fe/S) protein assembly (CIA) machinery. Required for maturation of extramitochondrial Fe-S proteins. The Nubp1-Nubp2 heterotetramer forms a Fe-S scaffold complex, mediating the de novo assembly of an Fe-S cluster and its transfer to target apoproteins. This Drosophila sechellia (Fruit fly) protein is Cytosolic Fe-S cluster assembly factor Nubp1 homolog.